Consider the following 320-residue polypeptide: Aminoacyl tRNA synthase complex-interacting multifunctional protein 2 (320 aa).

The interval 31-51 is disordered; it reads HSKTTSPATDAGHVQEPSEPS. Ser36 carries the phosphoserine modification. The interval 82–162 is interaction with PRKN; sequence TPDADLDVTN…HTHSSVKNVP (81 aa). The interaction with TP53 stretch occupies residues 162–225; sequence PENLLKCFGE…FLFSLFGQKH (64 aa). The GST C-terminal domain occupies 220 to 317; sequence LFGQKHNAVH…NLAPFSTALQ (98 aa).

In terms of assembly, part of the multisynthetase complex (MSC), a multisubunit complex that groups tRNA ligases for Arg (RARS1), Asp (DARS1), Gln (QARS1), Ile (IARS1), Leu (LARS1), Lys (KARS1), Met (MARS1) the bifunctional ligase for Glu and Pro (EPRS1) and the auxiliary subunits AIMP1/p43, AIMP2/p38 and EEF1E1/p18. Interacts (via N-terminus) with KARS1. Interacts with EPRS1. Forms a linear complex that contains MARS1, EEF1E1, EPRS1 and AIMP2 that is at the core of the multisubunit complex. Binds FUBP1 (via C-terminus). Interacts in both its unphosphorylated and phosphorylated forms with p53/TP53 (via N-terminus) in the nucleus following UV irradiation. Interacts (via N-terminus) with PRKN/parkin (via first RING-type domain). Interacts with TARS3. Post-translationally, phosphorylated on serine residues in response to UV irradiation. Ubiquitinated by PRKN, leading to its degradation by the proteasome.

It is found in the cytoplasm. The protein localises to the cytosol. The protein resides in the nucleus. Functionally, required for assembly and stability of the aminoacyl-tRNA synthase complex. Mediates ubiquitination and degradation of FUBP1, a transcriptional activator of MYC, leading to MYC down-regulation which is required for aveolar type II cell differentiation. Blocks MDM2-mediated ubiquitination and degradation of p53/TP53. Functions as a proapoptotic factor. In Rattus norvegicus (Rat), this protein is Aminoacyl tRNA synthase complex-interacting multifunctional protein 2 (Aimp2).